A 159-amino-acid polypeptide reads, in one-letter code: NADH-quinone oxidoreductase subunit B (159 aa).

The [4Fe-4S] cluster site is built by Cys37, Cys38, Cys102, and Cys132.

Belongs to the complex I 20 kDa subunit family. As to quaternary structure, NDH-1 is composed of 14 different subunits. Subunits NuoB, C, D, E, F, and G constitute the peripheral sector of the complex. Requires [4Fe-4S] cluster as cofactor.

The protein resides in the cell inner membrane. The catalysed reaction is a quinone + NADH + 5 H(+)(in) = a quinol + NAD(+) + 4 H(+)(out). NDH-1 shuttles electrons from NADH, via FMN and iron-sulfur (Fe-S) centers, to quinones in the respiratory chain. Couples the redox reaction to proton translocation (for every two electrons transferred, four hydrogen ions are translocated across the cytoplasmic membrane), and thus conserves the redox energy in a proton gradient. The sequence is that of NADH-quinone oxidoreductase subunit B from Vesicomyosocius okutanii subsp. Calyptogena okutanii (strain HA).